A 396-amino-acid chain; its full sequence is MTVRLFLAKGREKSLLRRHPWVFSGAVQRVEGKALSGETIDIHDAQGKWLARGAYSPESQIRARVWTFLPDEEINIEFFIRRLQQAQNWRDWVAKRDGLDGYRLIAGESDGMPGITIDRFQNFLVLQLLSAGAEYQRAALITALQHCYPECAIYDRSDVAVRKKEGLPLAQGQVVGDLPPALLPITEHGMKLLVDIQQGHKTGFYLDQRDSRLAARNYSAGRRVLNCFSYTGAFAVSALMGGCTQVISVDTSQAALDIAKQNVELNQLDLSKAEFVRDDVFQLLRAYRTQGEKFDLIIMDPPKFVENKNQLAGACRGYKDINMLALQLLNPGGILLSFSCSGLMPTDLFQKILADAAVDAGRDVQFIEQYRQAADHPVIATYPEGLYLKGFACRVM.

Residues 2–81 (TVRLFLAKGR…EEINIEFFIR (80 aa)) enclose the PUA domain.

This sequence belongs to the methyltransferase superfamily. RlmI family.

The protein localises to the cytoplasm. It catalyses the reaction cytidine(1962) in 23S rRNA + S-adenosyl-L-methionine = 5-methylcytidine(1962) in 23S rRNA + S-adenosyl-L-homocysteine + H(+). Functionally, specifically methylates the cytosine at position 1962 (m5C1962) of 23S rRNA. This is Ribosomal RNA large subunit methyltransferase I from Serratia proteamaculans (strain 568).